Consider the following 347-residue polypeptide: Histone deacetylase 11 (347 aa).

The tract at residues 14 to 318 (TRWPIVYSPR…ARIIADSILN (305 aa)) is histone deacetylase. Histidine 143 is an active-site residue.

The protein belongs to the histone deacetylase family. As to quaternary structure, interacts with HDAC6.

Its subcellular location is the nucleus. It catalyses the reaction N(6)-acetyl-L-lysyl-[histone] + H2O = L-lysyl-[histone] + acetate. Responsible for the deacetylation of lysine residues on the N-terminal part of the core histones (H2A, H2B, H3 and H4). Histone deacetylation gives a tag for epigenetic repression and plays an important role in transcriptional regulation, cell cycle progression and developmental events. Histone deacetylases act via the formation of large multiprotein complexes. This is Histone deacetylase 11 (HDAC11) from Macaca fascicularis (Crab-eating macaque).